A 79-amino-acid chain; its full sequence is Sulfur carrier protein TusA (79 aa).

Catalysis depends on cysteine 17, which acts as the Cysteine persulfide intermediate.

It belongs to the sulfur carrier protein TusA family.

Its subcellular location is the cytoplasm. Sulfur carrier protein which probably makes part of a sulfur-relay system. The protein is Sulfur carrier protein TusA of Actinobacillus pleuropneumoniae serotype 5b (strain L20).